Here is a 367-residue protein sequence, read N- to C-terminus: GPN-loop GTPase 1 (367 aa).

GTP is bound by residues G15–T22 and G18–T23. The short motif at G75–N77 is the Gly-Pro-Asn (GPN)-loop; involved in dimer interface element. A GTP-binding site is contributed by N178–D181. Residues E247–L290 adopt a coiled-coil conformation. Positions V306–A332 are disordered. S311 carries the phosphoserine modification. Over residues D312–A332 the composition is skewed to acidic residues.

The protein belongs to the GPN-loop GTPase family. In terms of assembly, heterodimers with gpn2 or fet5/gpn3. Binds to RNA polymerase II (RNAPII).

It is found in the cytoplasm. In terms of biological role, small GTPase required for proper nuclear import of RNA polymerase II (RNAPII). May act at an RNAP assembly step prior to nuclear import. This chain is GPN-loop GTPase 1, found in Schizosaccharomyces pombe (strain 972 / ATCC 24843) (Fission yeast).